Reading from the N-terminus, the 164-residue chain is uncharacterized protein (164 aa).

The next 2 membrane-spanning stretches (helical) occupy residues 11-31 (FYVNGFFSFLFLFLFLFPSLL) and 51-71 (CQQYSSLAIFTASGFWLLVLV).

The protein resides in the membrane. This is an uncharacterized protein from Saccharomyces cerevisiae (strain ATCC 204508 / S288c) (Baker's yeast).